The chain runs to 206 residues: Large ribosomal subunit protein uL4 (206 aa).

This sequence belongs to the universal ribosomal protein uL4 family. In terms of assembly, part of the 50S ribosomal subunit.

Functionally, one of the primary rRNA binding proteins, this protein initially binds near the 5'-end of the 23S rRNA. It is important during the early stages of 50S assembly. It makes multiple contacts with different domains of the 23S rRNA in the assembled 50S subunit and ribosome. In terms of biological role, forms part of the polypeptide exit tunnel. This is Large ribosomal subunit protein uL4 from Rhodopseudomonas palustris (strain BisB5).